Here is a 448-residue protein sequence, read N- to C-terminus: tRNA-2-methylthio-N(6)-dimethylallyladenosine synthase (448 aa).

Positions Gly3–Asp119 constitute an MTTase N-terminal domain. The [4Fe-4S] cluster site is built by Cys12, Cys49, Cys82, Cys156, Cys160, and Cys163. The region spanning Arg142 to Arg374 is the Radical SAM core domain. One can recognise a TRAM domain in the interval Glu377–Gly440.

This sequence belongs to the methylthiotransferase family. MiaB subfamily. Monomer. [4Fe-4S] cluster is required as a cofactor.

It is found in the cytoplasm. It catalyses the reaction N(6)-dimethylallyladenosine(37) in tRNA + (sulfur carrier)-SH + AH2 + 2 S-adenosyl-L-methionine = 2-methylsulfanyl-N(6)-dimethylallyladenosine(37) in tRNA + (sulfur carrier)-H + 5'-deoxyadenosine + L-methionine + A + S-adenosyl-L-homocysteine + 2 H(+). Its function is as follows. Catalyzes the methylthiolation of N6-(dimethylallyl)adenosine (i(6)A), leading to the formation of 2-methylthio-N6-(dimethylallyl)adenosine (ms(2)i(6)A) at position 37 in tRNAs that read codons beginning with uridine. The sequence is that of tRNA-2-methylthio-N(6)-dimethylallyladenosine synthase from Alkalilimnicola ehrlichii (strain ATCC BAA-1101 / DSM 17681 / MLHE-1).